We begin with the raw amino-acid sequence, 414 residues long: uncharacterized protein (414 aa).

A helical transmembrane segment spans residues 367–384 (TTWALTLICIACILLFFV).

It is found in the virion membrane. This is an uncharacterized protein from Human cytomegalovirus (strain Merlin) (HHV-5).